The following is a 94-amino-acid chain: ESAT-6-like protein EsxI (94 aa).

The protein belongs to the WXG100 family. ESAT-6 subfamily.

It localises to the secreted. This is ESAT-6-like protein EsxI from Mycobacterium bovis (strain ATCC BAA-935 / AF2122/97).